The sequence spans 316 residues: Ribosomal RNA small subunit methyltransferase H (316 aa).

Residues 32–34 (AGH), Asp-52, Phe-79, Asp-106, and Gln-113 each bind S-adenosyl-L-methionine.

This sequence belongs to the methyltransferase superfamily. RsmH family.

The protein localises to the cytoplasm. It catalyses the reaction cytidine(1402) in 16S rRNA + S-adenosyl-L-methionine = N(4)-methylcytidine(1402) in 16S rRNA + S-adenosyl-L-homocysteine + H(+). In terms of biological role, specifically methylates the N4 position of cytidine in position 1402 (C1402) of 16S rRNA. This Paenibacillus sp. (strain JDR-2) protein is Ribosomal RNA small subunit methyltransferase H.